We begin with the raw amino-acid sequence, 389 residues long: MVTVEEVRRAQRAKGPATIMAIGTATPSNCVDQSTYPDYYFRITNSEHMTELKEKFKRMCDKSMINKRYMHLTEEILKENPNICEYMAPSLDARQDIVVVEVPKLGKEAAQKAIKEWGQPKSKITHVVFCTTSGVDMPGADYQLTKLLGLRPSVKRLMMYQQGCFAGGTVIRLAKDLAENNKGARVLVVCSEITAVTFRGPSDTHLDSMVGQALFGDRAAAMIIGSDPLPEVERPLFELVSAAQTLLPDSEGAIDGHLREVGLTFHLLKDVPGLISKNIEKSLIEAFQPLGISDWNSIFWIAHPGGPAILDQVELKLSLKPEKLRATRQVLSDYGNMSSACVLFILDEMRKASSKEGLSTTGEGLDWGVLFGFGPGLTVETVVLHSVST.

C164 is an active-site residue.

The protein belongs to the thiolase-like superfamily. Chalcone/stilbene synthases family.

It carries out the reaction (E)-4-coumaroyl-CoA + 3 malonyl-CoA + 3 H(+) = 2',4,4',6'-tetrahydroxychalcone + 3 CO2 + 4 CoA. It functions in the pathway secondary metabolite biosynthesis; flavonoid biosynthesis. In terms of biological role, the primary product of this enzyme is 4,2',4',6'-tetrahydroxychalcone (also termed naringenin-chalcone or chalcone) which can under specific conditions spontaneously isomerize into naringenin. This is Chalcone synthase 2 (CHS2) from Solanum lycopersicum (Tomato).